Here is a 545-residue protein sequence, read N- to C-terminus: Glucose-6-phosphate isomerase (545 aa).

Glu-351 acts as the Proton donor in catalysis. Catalysis depends on residues His-382 and Lys-510.

The protein belongs to the GPI family.

It localises to the cytoplasm. It carries out the reaction alpha-D-glucose 6-phosphate = beta-D-fructose 6-phosphate. It functions in the pathway carbohydrate biosynthesis; gluconeogenesis. It participates in carbohydrate degradation; glycolysis; D-glyceraldehyde 3-phosphate and glycerone phosphate from D-glucose: step 2/4. Its function is as follows. Catalyzes the reversible isomerization of glucose-6-phosphate to fructose-6-phosphate. This is Glucose-6-phosphate isomerase from Helicobacter pylori (strain J99 / ATCC 700824) (Campylobacter pylori J99).